The sequence spans 234 residues: Sugar fermentation stimulation protein A (234 aa).

Residues 201-220 constitute a DNA-binding region (H-T-H motif); it reads LLSEAQNKGVEVLAYKAELS.

It belongs to the SfsA family.

In terms of biological role, binds to DNA non-specifically. Could be a regulatory factor involved in maltose metabolism. This is Sugar fermentation stimulation protein A from Salmonella agona (strain SL483).